The sequence spans 165 residues: Large ribosomal subunit protein uL11 (165 aa).

Residue Arg67 is modified to N5-methylarginine.

It belongs to the universal ribosomal protein uL11 family. As to quaternary structure, component of the large ribosomal subunit (LSU). Mature N.crassa ribosomes consist of a small (40S) and a large (60S) subunit. The 40S small subunit contains 1 molecule of ribosomal RNA (18S rRNA) and at least 32 different proteins. The large 60S subunit contains 3 rRNA molecules (26S, 5.8S and 5S rRNA) and at least 42 different proteins.

The protein resides in the cytoplasm. Component of the ribosome, a large ribonucleoprotein complex responsible for the synthesis of proteins in the cell. The small ribosomal subunit (SSU) binds messenger RNAs (mRNAs) and translates the encoded message by selecting cognate aminoacyl-transfer RNA (tRNA) molecules. The large subunit (LSU) contains the ribosomal catalytic site termed the peptidyl transferase center (PTC), which catalyzes the formation of peptide bonds, thereby polymerizing the amino acids delivered by tRNAs into a polypeptide chain. The nascent polypeptides leave the ribosome through a tunnel in the LSU and interact with protein factors that function in enzymatic processing, targeting, and the membrane insertion of nascent chains at the exit of the ribosomal tunnel. The sequence is that of Large ribosomal subunit protein uL11 (rpl-12) from Neurospora crassa (strain ATCC 24698 / 74-OR23-1A / CBS 708.71 / DSM 1257 / FGSC 987).